We begin with the raw amino-acid sequence, 488 residues long: DNA polymerase processivity factor (488 aa).

Disordered stretches follow at residues 1 to 26 (MTDSPGGVAPASPVEDASDASLGQPE), 331 to 453 (SPSA…RSGS), and 469 to 488 (PGAFSAFRGGPQTPYGFGFP). Residues 331–344 (SPSAGSSASRASGS) are compositionally biased toward low complexity. Residues 345–355 (EPTDSQDSASD) show a composition bias toward polar residues. Residues 368 to 379 (AARAGEAGALHA) show a composition bias toward low complexity. Polar residues predominate over residues 383 to 393 (PSSTTRVTPTT). Positions 394–413 (KRGRSGGEDARADTALKKPK) match the Bipartite nuclear localization signal motif. Residues 398–409 (SGGEDARADTAL) are compositionally biased toward basic and acidic residues. The segment covering 437–453 (ADGTAARPAAPDARSGS) has biased composition (low complexity).

This sequence belongs to the herpesviridae DNA polymerase processivity factor family. As to quaternary structure, interacts with the DNA polymerase catalytic subunit UL30. Interacts with the origin-binding protein.

It is found in the host nucleus. Its function is as follows. Plays an essential role in viral DNA replication by acting as the polymerase accessory subunit. Associates with the viral polymerase to increase its processivity and forms high-affinity direct interactions with DNA. Facilitates the origin-binding protein UL9 loading onto DNA thus increasing its ability to assemble into a functional complex capable of unwinding duplex DNA. This is DNA polymerase processivity factor from Homo sapiens (Human).